Here is a 629-residue protein sequence, read N- to C-terminus: LEAF RUST 10 DISEASE-RESISTANCE LOCUS RECEPTOR-LIKE PROTEIN KINASE-like 1.1 (629 aa).

The N-terminal stretch at 1 to 19 is a signal peptide; sequence METVSVLLFFFLFLLAAEA. The Extracellular segment spans residues 20–225; sequence RSTKRTGCKD…PNNYHAEMRL (206 aa). N-linked (GlcNAc...) asparagine glycans are attached at residues Asn56, Asn92, Asn123, Asn124, Asn172, and Asn177. A helical membrane pass occupies residues 226-246; it reads GLGIGGSVILIIILVALFAVI. Over 247 to 629 the chain is Cytoplasmic; sequence HRNYRRKDGS…TTPNTSAYEF (383 aa). The 275-residue stretch at 291-565 folds into the Protein kinase domain; it reads FSKDRLLGDG…TMEQVVHELK (275 aa). ATP is bound by residues 297-305 and Lys319; that span reads LGDGGFGTV. Phosphotyrosine is present on Tyr365. Asp416 functions as the Proton acceptor in the catalytic mechanism. Ser449 carries the post-translational modification Phosphoserine. Phosphothreonine occurs at positions 450 and 455. Residue Tyr463 is modified to Phosphotyrosine. A disordered region spans residues 609-629; it reads VSVTDQWTSKSTTPNTSAYEF.

The protein belongs to the protein kinase superfamily. Ser/Thr protein kinase family.

Its subcellular location is the cell membrane. The enzyme catalyses L-seryl-[protein] + ATP = O-phospho-L-seryl-[protein] + ADP + H(+). The catalysed reaction is L-threonyl-[protein] + ATP = O-phospho-L-threonyl-[protein] + ADP + H(+). In Arabidopsis thaliana (Mouse-ear cress), this protein is LEAF RUST 10 DISEASE-RESISTANCE LOCUS RECEPTOR-LIKE PROTEIN KINASE-like 1.1.